We begin with the raw amino-acid sequence, 257 residues long: Transcriptional regulatory protein TrcR (257 aa).

The 115-residue stretch at 33–147 folds into the Response regulatory domain; the sequence is RVLLVDDEPA…ELVARLRGLL (115 aa). D82 carries the post-translational modification 4-aspartylphosphate. The ompR/PhoB-type DNA-binding region spans 158-255; that stretch reads DEALRVGDLT…VRGIGYMLRP (98 aa).

In terms of processing, phosphorylated by TrcS.

Its function is as follows. Member of the two-component regulatory system TrcS/TrcR. Activates its own expression by binding specifically to the AT-rich sequence of the trcR promoter region. Also negatively regulates the expression of Rv1057 by binding to an AT-rich sequences within the Rv1057 upstream sequence. The TrcR-TrcS regulatory system may act as a transition regulatory system involved in adapting to an intracellular environment and transitioning from latency to reactivation. This chain is Transcriptional regulatory protein TrcR, found in Mycobacterium tuberculosis (strain ATCC 25618 / H37Rv).